The primary structure comprises 747 residues: Nucleolar complex-associated protein 3 (747 aa).

Over residues 1-11 the composition is skewed to basic residues; it reads MAARKNQKSPK. A disordered region spans residues 1–142; that stretch reads MAARKNQKSP…EDEQDYELRP (142 aa). Polar residues predominate over residues 74–86; that stretch reads ENPSSLKYLSSIN. A compositionally biased stretch (basic and acidic residues) spans 89–109; that stretch reads DLGKKVEKGPRPDIYDLKKSQ. Ser-120 carries the phosphoserine modification. Positions 214-234 form a coiled coil; the sequence is KQQIKNDKEALGIQAQQLLEE.

This sequence belongs to the CBF/MAK21 family.

It is found in the nucleus. The protein localises to the nucleolus. Functionally, may be required for synthesis of 60S ribosomal subunits and the transport of pre-ribosomes from the nucleoplasm to the cytoplasm. The polypeptide is Nucleolar complex-associated protein 3 (noc3) (Schizosaccharomyces pombe (strain 972 / ATCC 24843) (Fission yeast)).